Reading from the N-terminus, the 130-residue chain is Histone H2A type 1-F (130 aa).

The segment at M1–A22 is disordered. S2 carries the post-translational modification Phosphoserine; by RPS6KA5. Residue R4 is modified to Citrulline; alternate. Residue R4 is modified to Symmetric dimethylarginine; by PRMT5; alternate. The residue at position 6 (K6) is an N6-(2-hydroxyisobutyryl)lysine; alternate. The residue at position 6 (K6) is an N6-(beta-hydroxybutyryl)lysine; alternate. Residues Q7–S19 are compositionally biased toward basic residues. K10 bears the N6-(2-hydroxyisobutyryl)lysine mark. At K10 the chain carries N6-lactoyllysine; alternate. K37 is subject to N6-(2-hydroxyisobutyryl)lysine; alternate. Position 37 is an N6-(beta-hydroxybutyryl)lysine; alternate (K37). The residue at position 37 (K37) is an N6-crotonyllysine; alternate. N6-(2-hydroxyisobutyryl)lysine occurs at positions 75, 76, and 96. Residue K96 is modified to N6-glutaryllysine; alternate. Q105 is subject to N5-methylglutamine. An N6-(2-hydroxyisobutyryl)lysine; alternate modification is found at K119. Residues K119 and K120 each carry the N6-crotonyllysine; alternate modification. K119 and K120 each carry N6-glutaryllysine; alternate. K120 carries the post-translational modification N6-(beta-hydroxybutyryl)lysine; alternate. K120 participates in a covalent cross-link: Glycyl lysine isopeptide (Lys-Gly) (interchain with G-Cter in ubiquitin); alternate. Position 121 is a phosphothreonine; by DCAF1 (T121). K126 carries the post-translational modification N6-(beta-hydroxybutyryl)lysine; alternate. K126 carries the post-translational modification N6-crotonyllysine; alternate. K126 carries the post-translational modification N6-glutaryllysine; alternate.

This sequence belongs to the histone H2A family. In terms of assembly, the nucleosome is a histone octamer containing two molecules each of H2A, H2B, H3 and H4 assembled in one H3-H4 heterotetramer and two H2A-H2B heterodimers. The octamer wraps approximately 147 bp of DNA. Post-translationally, deiminated on Arg-4 in granulocytes upon calcium entry. In terms of processing, monoubiquitination of Lys-120 (H2AK119Ub) by RING1, TRIM37 and RNF2/RING2 complex gives a specific tag for epigenetic transcriptional repression and participates in X chromosome inactivation of female mammals. It is involved in the initiation of both imprinted and random X inactivation. Ubiquitinated H2A is enriched in inactive X chromosome chromatin. Ubiquitination of H2A functions downstream of methylation of 'Lys-27' of histone H3 (H3K27me). H2AK119Ub by RNF2/RING2 can also be induced by ultraviolet and may be involved in DNA repair. Following DNA double-strand breaks (DSBs), it is ubiquitinated through 'Lys-63' linkage of ubiquitin moieties by the E2 ligase UBE2N and the E3 ligases RNF8 and RNF168, leading to the recruitment of repair proteins to sites of DNA damage. Ubiquitination at Lys-14 and Lys-16 (H2AK13Ub and H2AK15Ub, respectively) in response to DNA damage is initiated by RNF168 that mediates monoubiquitination at these 2 sites, and 'Lys-63'-linked ubiquitin are then conjugated to monoubiquitin; RNF8 is able to extend 'Lys-63'-linked ubiquitin chains in vitro. H2AK119Ub and ionizing radiation-induced 'Lys-63'-linked ubiquitination (H2AK13Ub and H2AK15Ub) are distinct events. Phosphorylation on Ser-2 (H2AS1ph) is enhanced during mitosis. Phosphorylation on Ser-2 by RPS6KA5/MSK1 directly represses transcription. Acetylation of H3 inhibits Ser-2 phosphorylation by RPS6KA5/MSK1. Phosphorylation at Thr-121 (H2AT120ph) by DCAF1 is present in the regulatory region of many tumor suppresor genes and down-regulates their transcription. Post-translationally, symmetric dimethylation on Arg-4 by the PRDM1/PRMT5 complex may play a crucial role in the germ-cell lineage. In terms of processing, glutamine methylation at Gln-105 (H2AQ104me) by FBL is specifically dedicated to polymerase I. It is present at 35S ribosomal DNA locus and impairs binding of the FACT complex. Crotonylation (Kcr) is specifically present in male germ cells and marks testis-specific genes in post-meiotic cells, including X-linked genes that escape sex chromosome inactivation in haploid cells. Crotonylation marks active promoters and enhancers and confers resistance to transcriptional repressors. It is also associated with post-meiotically activated genes on autosomes. Post-translationally, hydroxybutyrylation of histones is induced by starvation. In terms of processing, lactylated in macrophages by EP300/P300 by using lactoyl-CoA directly derived from endogenous or exogenous lactate, leading to stimulates gene transcription.

The protein localises to the nucleus. It localises to the chromosome. Core component of nucleosome. Nucleosomes wrap and compact DNA into chromatin, limiting DNA accessibility to the cellular machineries which require DNA as a template. Histones thereby play a central role in transcription regulation, DNA repair, DNA replication and chromosomal stability. DNA accessibility is regulated via a complex set of post-translational modifications of histones, also called histone code, and nucleosome remodeling. The protein is Histone H2A type 1-F (Hist1h2af) of Mus musculus (Mouse).